The primary structure comprises 143 residues: Interleukin-4 (143 aa).

The first 19 residues, 1–19, serve as a signal peptide directing secretion; the sequence is MGLSPQLAAVLLCLLVCTG. Intrachain disulfides connect Cys48–Cys88 and Cys70–Cys115. 2 N-linked (GlcNAc...) asparagine glycosylation sites follow: Asn62 and Asn91.

Belongs to the IL-4/IL-13 family.

The protein resides in the secreted. Functionally, participates in at least several B-cell activation processes as well as of other cell types. It is a costimulator of DNA-synthesis. It induces the expression of class II MHC molecules on resting B-cells. It enhances both secretion and cell surface expression of IgE and IgG1. It also regulates the expression of the low affinity Fc receptor for IgE (CD23) on both lymphocytes and monocytes. Positively regulates IL31RA expression in macrophages. Stimulates autophagy in dendritic cells by interfering with mTORC1 signaling and through the induction of RUFY4. The chain is Interleukin-4 (IL4) from Meriones unguiculatus (Mongolian jird).